The primary structure comprises 138 residues: Probable DNA-directed RNA polymerases I, II, and III subunit RPABC2 (138 aa).

Composition is skewed to acidic residues over residues methionine 1–glutamate 27 and glutamate 35–asparagine 46. The tract at residues methionine 1 to asparagine 46 is disordered.

This sequence belongs to the archaeal Rpo6/eukaryotic RPB6 RNA polymerase subunit family. As to quaternary structure, component of the RNA polymerase I (Pol I), RNA polymerase II (Pol II) and RNA polymerase III (Pol III) complexes consisting of at least 13, 12 and 17 subunits, respectively.

The protein localises to the nucleus. Its function is as follows. DNA-dependent RNA polymerases catalyze the transcription of DNA into RNA using the four ribonucleoside triphosphates as substrates. Common component of RNA polymerases I, II and III which synthesize ribosomal RNA precursors, mRNA precursors and many functional non-coding RNAs, and small RNAs, such as 5S rRNA and tRNAs, respectively. Pol II is the central component of the basal RNA polymerase II transcription machinery. Pols are composed of mobile elements that move relative to each other. In Pol II, RPB6 is part of the clamp element and together with parts of RPB1 and RPB2 forms a pocket to which the RPB4-RPB7 subcomplex binds. The polypeptide is Probable DNA-directed RNA polymerases I, II, and III subunit RPABC2 (Caenorhabditis briggsae).